Here is a 349-residue protein sequence, read N- to C-terminus: MSKIRVLSVDDSALMRQIMTEIINSHSDMEMVATAPDPLVARDLIKKFNPDVLTLDVEMPRMDGLDFLEKLMRLRPMPVVMVSSLTGKGSEVTLRALELGAIDFVTKPQLGIREGMLAYSEMIAEKVRTAAKASLAAHKPLSAPTTLKAGPLLSSEKLIAIGASTGGTEAIRHVLQPLPLSSPALLITQHMPPGFTRSFADRLNKLCQIGVKEAEDGERVLPGHAYIAPGDRHMELARSGANYQIKIHDGPAVNRHRPSVDVLFHSVAKQAGRNAVGVILTGMGNDGAAGMLAMRQAGAWTLAQNEASCVVFGMPREAINMGGVCEVVDLSQVSQQMLATISAGQAIRI.

The 118-residue stretch at 5-122 (RVLSVDDSAL…REGMLAYSEM (118 aa)) folds into the Response regulatory domain. Asp-56 carries the post-translational modification 4-aspartylphosphate. Residues 152-344 (LLSSEKLIAI…QQMLATISAG (193 aa)) form the CheB-type methylesterase domain. Active-site residues include Ser-164, His-190, and Asp-286.

It belongs to the CheB family. In terms of processing, phosphorylated by CheA. Phosphorylation of the N-terminal regulatory domain activates the methylesterase activity.

It localises to the cytoplasm. The catalysed reaction is [protein]-L-glutamate 5-O-methyl ester + H2O = L-glutamyl-[protein] + methanol + H(+). The enzyme catalyses L-glutaminyl-[protein] + H2O = L-glutamyl-[protein] + NH4(+). Its function is as follows. Involved in chemotaxis. Part of a chemotaxis signal transduction system that modulates chemotaxis in response to various stimuli. Catalyzes the demethylation of specific methylglutamate residues introduced into the chemoreceptors (methyl-accepting chemotaxis proteins or MCP) by CheR. Also mediates the irreversible deamidation of specific glutamine residues to glutamic acid. The chain is Protein-glutamate methylesterase/protein-glutamine glutaminase from Shigella flexneri.